The chain runs to 198 residues: Probable septum site-determining protein MinC (198 aa).

Belongs to the MinC family. Interacts with MinD and FtsZ.

In terms of biological role, cell division inhibitor that blocks the formation of polar Z ring septums. Rapidly oscillates between the poles of the cell to destabilize FtsZ filaments that have formed before they mature into polar Z rings. Prevents FtsZ polymerization. This Thermosipho melanesiensis (strain DSM 12029 / CIP 104789 / BI429) protein is Probable septum site-determining protein MinC.